Here is a 149-residue protein sequence, read N- to C-terminus: Transcriptional repressor NrdR (149 aa).

Residues 3 to 34 fold into a zinc finger; that stretch reads CPFCGNRDTNVRDSRSVNEGTFIKRRRFCGEC. An ATP-cone domain is found at 49–139; sequence IKVIKKNGSC…VYMNFENEKD (91 aa).

This sequence belongs to the NrdR family. The cofactor is Zn(2+).

Functionally, negatively regulates transcription of bacterial ribonucleotide reductase nrd genes and operons by binding to NrdR-boxes. The chain is Transcriptional repressor NrdR from Neorickettsia sennetsu (strain ATCC VR-367 / Miyayama) (Ehrlichia sennetsu).